A 540-amino-acid polypeptide reads, in one-letter code: Chaperonin GroEL (540 aa).

ATP contacts are provided by residues 29 to 32 (TLGP), 86 to 90 (DGTTT), G413, 476 to 478 (NAA), and D492.

This sequence belongs to the chaperonin (HSP60) family. As to quaternary structure, forms a cylinder of 14 subunits composed of two heptameric rings stacked back-to-back. Interacts with the co-chaperonin GroES.

The protein resides in the cytoplasm. It carries out the reaction ATP + H2O + a folded polypeptide = ADP + phosphate + an unfolded polypeptide.. Together with its co-chaperonin GroES, plays an essential role in assisting protein folding. The GroEL-GroES system forms a nano-cage that allows encapsulation of the non-native substrate proteins and provides a physical environment optimized to promote and accelerate protein folding. The polypeptide is Chaperonin GroEL (Streptococcus pneumoniae (strain ATCC 700669 / Spain 23F-1)).